Consider the following 288-residue polypeptide: Histone-lysine N-methyltransferase Suv4-20 (288 aa).

The region spanning Gln128 to Gly238 is the SET domain.

Belongs to the class V-like SAM-binding methyltransferase superfamily. Histone-lysine methyltransferase family. Suvar4-20 subfamily.

It is found in the nucleus. It localises to the chromosome. The catalysed reaction is N(6)-methyl-L-lysyl(20)-[histone H4] + S-adenosyl-L-methionine = N(6),N(6)-dimethyl-L-lysyl(20)-[histone H4] + S-adenosyl-L-homocysteine + H(+). It catalyses the reaction N(6),N(6)-dimethyl-L-lysyl(20)-[histone H4] + S-adenosyl-L-methionine = N(6),N(6),N(6)-trimethyl-L-lysyl(20)-[histone H4] + S-adenosyl-L-homocysteine + H(+). Its function is as follows. Histone methyltransferase that specifically di- and trimethylates 'Lys-20' of histone H4 (H4K20me2/me3). H4 'Lys-20' trimethylation represents a specific tag for epigenetic transcriptional repression. Contributes to dosage compensation of X chromosome-relative to autosome-linked gene expression, possibly by converting H4K20me1 to H4K20m2/me3 on autosomes. Involved in the regulation of growth and body fat metabolism downstream of the TOR complex 2 pathway. This Caenorhabditis elegans protein is Histone-lysine N-methyltransferase Suv4-20 (set-4).